The sequence spans 261 residues: tRNA U34 carboxymethyltransferase (261 aa).

Residues Lys-25, Trp-39, Lys-44, Gly-63, 114 to 115 (VE), Tyr-135, and Arg-250 contribute to the carboxy-S-adenosyl-L-methionine site.

It belongs to the class I-like SAM-binding methyltransferase superfamily. CmoB family. As to quaternary structure, homotetramer.

The enzyme catalyses carboxy-S-adenosyl-L-methionine + 5-hydroxyuridine(34) in tRNA = 5-carboxymethoxyuridine(34) in tRNA + S-adenosyl-L-homocysteine + H(+). Its function is as follows. Catalyzes carboxymethyl transfer from carboxy-S-adenosyl-L-methionine (Cx-SAM) to 5-hydroxyuridine (ho5U) to form 5-carboxymethoxyuridine (cmo5U) at position 34 in tRNAs. The polypeptide is tRNA U34 carboxymethyltransferase (Helicobacter pylori (strain J99 / ATCC 700824) (Campylobacter pylori J99)).